A 524-amino-acid polypeptide reads, in one-letter code: GMP synthase [glutamine-hydrolyzing] (524 aa).

Positions 10–199 constitute a Glutamine amidotransferase type-1 domain; the sequence is PVLVVDFGAQ…LTEVAGLEQT (190 aa). The active-site Nucleophile is Cys87. Residues His173 and Glu175 contribute to the active site. Residues 200–398 form the GMPS ATP-PPase domain; sequence WTSANIAQQL…LGLPEEIVAR (199 aa). 228–234 contacts ATP; sequence SGGVDSA.

In terms of assembly, homodimer.

It catalyses the reaction XMP + L-glutamine + ATP + H2O = GMP + L-glutamate + AMP + diphosphate + 2 H(+). It functions in the pathway purine metabolism; GMP biosynthesis; GMP from XMP (L-Gln route): step 1/1. Functionally, catalyzes the synthesis of GMP from XMP. This Corynebacterium ammoniagenes (Brevibacterium ammoniagenes) protein is GMP synthase [glutamine-hydrolyzing] (guaA).